A 93-amino-acid chain; its full sequence is Pyrimidine/purine nucleoside phosphorylase (93 aa).

It belongs to the nucleoside phosphorylase PpnP family.

It catalyses the reaction a purine D-ribonucleoside + phosphate = a purine nucleobase + alpha-D-ribose 1-phosphate. The catalysed reaction is adenosine + phosphate = alpha-D-ribose 1-phosphate + adenine. The enzyme catalyses cytidine + phosphate = cytosine + alpha-D-ribose 1-phosphate. It carries out the reaction guanosine + phosphate = alpha-D-ribose 1-phosphate + guanine. It catalyses the reaction inosine + phosphate = alpha-D-ribose 1-phosphate + hypoxanthine. The catalysed reaction is thymidine + phosphate = 2-deoxy-alpha-D-ribose 1-phosphate + thymine. The enzyme catalyses uridine + phosphate = alpha-D-ribose 1-phosphate + uracil. It carries out the reaction xanthosine + phosphate = alpha-D-ribose 1-phosphate + xanthine. Catalyzes the phosphorolysis of diverse nucleosides, yielding D-ribose 1-phosphate and the respective free bases. Can use uridine, adenosine, guanosine, cytidine, thymidine, inosine and xanthosine as substrates. Also catalyzes the reverse reactions. In Aliivibrio salmonicida (strain LFI1238) (Vibrio salmonicida (strain LFI1238)), this protein is Pyrimidine/purine nucleoside phosphorylase.